A 648-amino-acid chain; its full sequence is DNA ligase (648 aa).

NAD(+) contacts are provided by residues 63-67 (DILYD) and 105-106 (ST). Residue Lys143 is the N6-AMP-lysine intermediate of the active site. NAD(+) is bound by residues Arg159, Glu190, and Lys302. Zn(2+) contacts are provided by Cys390, Cys393, Cys406, and Cys412. The 79-residue stretch at 570–648 (SLASPLTGKI…SEQEYLDLIS (79 aa)) folds into the BRCT domain.

The protein belongs to the NAD-dependent DNA ligase family. LigA subfamily. The cofactor is Mg(2+). Requires Mn(2+) as cofactor.

It catalyses the reaction NAD(+) + (deoxyribonucleotide)n-3'-hydroxyl + 5'-phospho-(deoxyribonucleotide)m = (deoxyribonucleotide)n+m + AMP + beta-nicotinamide D-nucleotide.. Its function is as follows. DNA ligase that catalyzes the formation of phosphodiester linkages between 5'-phosphoryl and 3'-hydroxyl groups in double-stranded DNA using NAD as a coenzyme and as the energy source for the reaction. It is essential for DNA replication and repair of damaged DNA. The sequence is that of DNA ligase from Shewanella baltica (strain OS155 / ATCC BAA-1091).